The sequence spans 347 residues: Gibberellin 3-beta-dioxygenase 2 (347 aa).

A Fe2OG dioxygenase domain is found at 197 to 301 (DFQGTQAVIQ…RFSMAYLWGP (105 aa)). Residues H225, D227, and H282 each coordinate Fe cation. R292 is a catalytic residue. Residue R292 participates in 2-oxoglutarate binding.

The protein belongs to the iron/ascorbate-dependent oxidoreductase family. GA3OX subfamily. The cofactor is L-ascorbate. Fe(2+) serves as cofactor. As to expression, highly expressed in seedlings but also expressed in roots, leaves, stems, flowers, siliques and seeds. Detected predominantly in the hypocotyl and roots of young seedlings and in the petioles and vasculature of leaves. Not expressed in the shoot apical meristem, but found in the elongation zone, the quiescent center cells and the columella cells of the root tips. Found in the cortex and the endodermis of the embryo axis in germinating seeds.

It carries out the reaction gibberellin A20 + 2-oxoglutarate + O2 = gibberellin A1 + succinate + CO2. The protein operates within plant hormone biosynthesis; gibberellin biosynthesis. In terms of biological role, converts the inactive gibberellin (GA) precursors GA9 and GA20 in the bioactives gibberellins GA4 and GA1. Involved in the production of bioactive GA for vegetative growth and development. The protein is Gibberellin 3-beta-dioxygenase 2 of Arabidopsis thaliana (Mouse-ear cress).